A 159-amino-acid chain; its full sequence is MATLTIEELAQTLQPAQAIAGLDLGTKTIGLAMSDLSRRFATPRPVIKRVKFTQDAQVLLAFAEKEKVAAFVIGLPINMDGSAGPRAQATRAFVRTMGEKTALPFIYWDERLSTVAAERALLEMDVSRAKRAERIDSAAASFILQGALDRLSALTRAAD.

This sequence belongs to the YqgF nuclease family.

The protein resides in the cytoplasm. Its function is as follows. Could be a nuclease involved in processing of the 5'-end of pre-16S rRNA. The chain is Putative pre-16S rRNA nuclease from Agrobacterium fabrum (strain C58 / ATCC 33970) (Agrobacterium tumefaciens (strain C58)).